Consider the following 378-residue polypeptide: MKILVDENMPYARELFSRLGEVKAVPGRPIPVAQLADADALMVRSVTKVNESLLAGKPIKFVGTATAGTDHVDEAWLKQAGIGFSAAPGCNAIAVVEYVFSSLLMLAERDGFSLHERTVGIVGVGNVGRRLQARLEALGIKTLLCDPPRADRGDEGDFRSLDELVQHADILTFHTPLFKDGPYKTLHLADEKLIRSLKPGAILINACRGAVVDNTALLTCLNEGQKLSVVLDVWEGEPELNVELLKKVDIGTPHIAGYTLEGKARGTTQVFEAYSKFIGHEQHVALDTLLPAPEFGRITLHGLLDQPTLKRLVHLVYDVRRDDAPLRKVAGIPGEFDKLRKNYLERREWSSLYVICDDASAASLLCKLGFNAVHHPAR.

The substrate site is built by S45 and T66. 2 residues coordinate NAD(+): D146 and T175. R208 is a catalytic residue. Residue D232 coordinates NAD(+). The active site involves E237. The active-site Proton donor is H254. G257 serves as a coordination point for NAD(+). Substrate is bound at residue Y258.

The protein belongs to the D-isomer specific 2-hydroxyacid dehydrogenase family. PdxB subfamily. As to quaternary structure, homodimer.

Its subcellular location is the cytoplasm. It catalyses the reaction 4-phospho-D-erythronate + NAD(+) = (R)-3-hydroxy-2-oxo-4-phosphooxybutanoate + NADH + H(+). It functions in the pathway cofactor biosynthesis; pyridoxine 5'-phosphate biosynthesis; pyridoxine 5'-phosphate from D-erythrose 4-phosphate: step 2/5. Functionally, catalyzes the oxidation of erythronate-4-phosphate to 3-hydroxy-2-oxo-4-phosphonooxybutanoate. This is Erythronate-4-phosphate dehydrogenase from Escherichia fergusonii (strain ATCC 35469 / DSM 13698 / CCUG 18766 / IAM 14443 / JCM 21226 / LMG 7866 / NBRC 102419 / NCTC 12128 / CDC 0568-73).